Reading from the N-terminus, the 531-residue chain is Aspartate--tRNA ligase, cytoplasmic (531 aa).

The disordered stretch occupies residues 1–45 (MADAAEGEQPKLSKKELNKLARKAKKDEKAGEKGGNQQQAAAMDQ). The segment covering 8–32 (EQPKLSKKELNKLARKAKKDEKAGE) has biased composition (basic and acidic residues). Glutamate 259 provides a ligand contact to L-aspartate. Positions 281 to 284 (QLYK) are aspartate. Arginine 303 contacts L-aspartate. Residues 303–305 (RAE), 311–313 (RHM), and glutamate 454 contribute to the ATP site. 2 residues coordinate L-aspartate: serine 457 and arginine 461. 502–505 (GLER) contributes to the ATP binding site.

Belongs to the class-II aminoacyl-tRNA synthetase family. Type 2 subfamily. Homodimer.

It is found in the cytoplasm. The catalysed reaction is tRNA(Asp) + L-aspartate + ATP = L-aspartyl-tRNA(Asp) + AMP + diphosphate. This Caenorhabditis elegans protein is Aspartate--tRNA ligase, cytoplasmic.